The primary structure comprises 262 residues: Troponin T, slow skeletal muscle (262 aa).

Acidic residues predominate over residues 1–31 (MSDTEEQEYEEEQAEDEEAVEEEEAPEEPEP). Disordered regions lie at residues 1-62 (MSDT…ERVD) and 109-153 (ERAE…KKKV). The residue at position 2 (S2) is a Phosphoserine; by CK2. A compositionally biased stretch (basic and acidic residues) spans 32 to 41 (VAEREEERPK). The segment covering 43–55 (SRPVVPPLIPPKI) has biased composition (pro residues). Over residues 109-149 (ERAEQQRFRTEKERERQAKLAEEKMRKEEEEAKKRAEDDAK) the composition is skewed to basic and acidic residues.

Belongs to the troponin T family. In terms of assembly, interacts with TPM3. As to expression, expressed in adult soleus muscle.

Its function is as follows. Troponin T is the tropomyosin-binding subunit of troponin, the thin filament regulatory complex which confers calcium-sensitivity to striated muscle actomyosin ATPase activity. The protein is Troponin T, slow skeletal muscle (Tnnt1) of Mus musculus (Mouse).